Consider the following 298-residue polypeptide: Cation-efflux pump FieF (298 aa).

The helical transmembrane segment at 24–44 (LLIKIFAWWYTGSVSILAALV) threads the bilayer. Positions 45 and 49 each coordinate Zn(2+). The next 2 membrane-spanning stretches (helical) occupy residues 80–100 (SLAA…LTSI) and 112–132 (PGVG…LVTF). The Zn(2+) site is built by His151 and Asp155. 2 consecutive transmembrane segments (helical) span residues 154-174 (SDVM…YGWH) and 176-196 (ADAL…LRMG).

It belongs to the cation diffusion facilitator (CDF) transporter (TC 2.A.4) family. FieF subfamily. As to quaternary structure, homodimer.

It is found in the cell inner membrane. It carries out the reaction Zn(2+)(in) + H(+)(out) = Zn(2+)(out) + H(+)(in). The enzyme catalyses Cd(2+)(in) + H(+)(out) = Cd(2+)(out) + H(+)(in). The catalysed reaction is Fe(2+)(in) + H(+)(out) = Fe(2+)(out) + H(+)(in). Divalent metal cation transporter which exports Zn(2+), Cd(2+) and possibly Fe(2+). May be involved in zinc and iron detoxification by efflux. This is Cation-efflux pump FieF from Salmonella typhi.